Reading from the N-terminus, the 296-residue chain is Protoheme IX farnesyltransferase 2 (296 aa).

9 consecutive transmembrane segments (helical) span residues 7 to 27 (LLVA…GGYF), 36 to 56 (PMLL…GCVL), 83 to 103 (LKAA…LLWW), 108 to 128 (LTTA…SLWF), 134 to 154 (YGTL…YCAV), 163 to 183 (ASLL…IAIF), 207 to 227 (IHIV…CLGG), 229 to 249 (AGYG…AIAL), and 265 to 285 (FAFS…DFQV).

This sequence belongs to the UbiA prenyltransferase family. Protoheme IX farnesyltransferase subfamily.

It localises to the cell inner membrane. It carries out the reaction heme b + (2E,6E)-farnesyl diphosphate + H2O = Fe(II)-heme o + diphosphate. The protein operates within porphyrin-containing compound metabolism; heme O biosynthesis; heme O from protoheme: step 1/1. Converts heme B (protoheme IX) to heme O by substitution of the vinyl group on carbon 2 of heme B porphyrin ring with a hydroxyethyl farnesyl side group. This is Protoheme IX farnesyltransferase 2 from Pseudomonas paraeruginosa (strain DSM 24068 / PA7) (Pseudomonas aeruginosa (strain PA7)).